Reading from the N-terminus, the 288-residue chain is Prohibitin-2 (288 aa).

The chain crosses the membrane as a helical; Signal-anchor for type II membrane protein span at residues 21-43 (GKYAFTGTGLLLALGLAGFAVQT). The AIM signature appears at 125–128 (YRTL).

It belongs to the prohibitin family. In terms of assembly, the mitochondrial prohibitin complex consists of two subunits (phb1 and phb2). The subunits assemble into a membrane-associated ring-shaped supercomplex of approximately 1 mDa.

The protein resides in the mitochondrion inner membrane. Functionally, prohibitin probably acts as a holdase/unfoldase for the stabilization of newly synthesized mitochondrial proteins. Involved in mitophagy; may act as an adapter for atg8 that supports mitophagosome assembly. Negatively regulates the proteolytic processing of atg32 via the i-AAA protease. Acts as a negative regulator of the m-AAA protease. The protein is Prohibitin-2 (phb2) of Schizosaccharomyces pombe (strain 972 / ATCC 24843) (Fission yeast).